We begin with the raw amino-acid sequence, 338 residues long: Lipoate-protein ligase A (338 aa).

A BPL/LPL catalytic domain is found at 29–216 (PATQRVLFLW…AFFAHYGERV (188 aa)). Residues R71, 76–79 (GAVF), and K134 each bind ATP. K134 provides a ligand contact to (R)-lipoate.

Belongs to the LplA family. In terms of assembly, monomer.

The protein resides in the cytoplasm. The enzyme catalyses L-lysyl-[lipoyl-carrier protein] + (R)-lipoate + ATP = N(6)-[(R)-lipoyl]-L-lysyl-[lipoyl-carrier protein] + AMP + diphosphate + H(+). Its pathway is protein modification; protein lipoylation via exogenous pathway; protein N(6)-(lipoyl)lysine from lipoate: step 1/2. The protein operates within protein modification; protein lipoylation via exogenous pathway; protein N(6)-(lipoyl)lysine from lipoate: step 2/2. Catalyzes both the ATP-dependent activation of exogenously supplied lipoate to lipoyl-AMP and the transfer of the activated lipoyl onto the lipoyl domains of lipoate-dependent enzymes. The polypeptide is Lipoate-protein ligase A (Escherichia coli O81 (strain ED1a)).